An 85-amino-acid polypeptide reads, in one-letter code: Large ribosomal subunit protein bL27 (85 aa).

Residues 1-20 (MATKKAGGSTRNGRDSEAKR) are disordered.

This sequence belongs to the bacterial ribosomal protein bL27 family.

This is Large ribosomal subunit protein bL27 from Actinobacillus succinogenes (strain ATCC 55618 / DSM 22257 / CCUG 43843 / 130Z).